An 833-amino-acid chain; its full sequence is Piwi-like protein 2 (833 aa).

A PAZ domain is found at arginine 227 to glycine 353. Positions proline 313–lysine 338 are disordered. A compositionally biased stretch (basic and acidic residues) spans lysine 320–lysine 338. Positions lysine 515 to lysine 815 constitute a Piwi domain.

It belongs to the argonaute family. Piwi subfamily. In terms of tissue distribution, expressed in dividing adult stem cells.

Functionally, required for the production of functional progeny from adult somatic stem cells (neoblasts). This chain is Piwi-like protein 2 (wi-2), found in Schmidtea mediterranea (Freshwater planarian flatworm).